We begin with the raw amino-acid sequence, 679 residues long: Protein FAM178B (679 aa).

The tract at residues 70–113 is disordered; it reads PLDQGPRCPARRPCSPASAPAPTSPKKPKIQAPGETFPTDWSPP. The span at 75 to 90 shows a compositional bias: low complexity; sequence PRCPARRPCSPASAPA.

It belongs to the FAM178 family.

The protein is Protein FAM178B of Homo sapiens (Human).